Reading from the N-terminus, the 902-residue chain is HTH-type transcriptional regulator MalT (902 aa).

An ATP-binding site is contributed by 39 to 46 (SPAGYGKT). One can recognise an HTH luxR-type domain in the interval 830–895 (ELIRTSPLTQ…DAVQHAQQLL (66 aa)). Residues 854–873 (NEQIAGELAVAATTIKTHIR) constitute a DNA-binding region (H-T-H motif).

The protein belongs to the MalT family. Monomer in solution. Oligomerizes to an active state in the presence of the positive effectors ATP and maltotriose.

Activated by ATP and maltotriose, which are both required for DNA binding. Its function is as follows. Positively regulates the transcription of the maltose regulon whose gene products are responsible for uptake and catabolism of malto-oligosaccharides. Specifically binds to the promoter region of its target genes, recognizing a short DNA motif called the MalT box. The polypeptide is HTH-type transcriptional regulator MalT (Salmonella dublin (strain CT_02021853)).